Reading from the N-terminus, the 92-residue chain is Small ribosomal subunit protein uS19 (92 aa).

The protein belongs to the universal ribosomal protein uS19 family.

In terms of biological role, protein S19 forms a complex with S13 that binds strongly to the 16S ribosomal RNA. This Synechocystis sp. (strain ATCC 27184 / PCC 6803 / Kazusa) protein is Small ribosomal subunit protein uS19 (rpsS).